We begin with the raw amino-acid sequence, 93 residues long: Small ribosomal subunit protein bS20 (93 aa).

The protein belongs to the bacterial ribosomal protein bS20 family.

Functionally, binds directly to 16S ribosomal RNA. The polypeptide is Small ribosomal subunit protein bS20 (Dictyoglomus thermophilum (strain ATCC 35947 / DSM 3960 / H-6-12)).